The following is a 324-amino-acid chain: Phospho-N-acetylmuramoyl-pentapeptide-transferase (324 aa).

The next 10 helical transmembrane spans lie at 5–25, 52–72, 77–97, 117–137, 147–167, 176–196, 202–222, 227–247, 253–273, and 302–322; these read GLLVTAGVAFLISVALSPLFI, PTMGGIVIYVSMMVTTLIMAI, LGAEVSLLLLVTFGYGLIGFL, LLGQLIIAIAFFAIAKGQGFD, ITFDLYWAYFILVLFMLIGGS, LDGLLSGTAAIAFGAFSIIAV, AVAIFCMAVVGAVLGFLVFNA, VFMGDTGSLALGGAIAAVAIL, LLVIIGGVFVMETLSVIIQVI, and VVVTFWSVGFLLAVLGIYIGV.

The protein belongs to the glycosyltransferase 4 family. MraY subfamily. Requires Mg(2+) as cofactor.

It localises to the cell membrane. It catalyses the reaction UDP-N-acetyl-alpha-D-muramoyl-L-alanyl-gamma-D-glutamyl-meso-2,6-diaminopimeloyl-D-alanyl-D-alanine + di-trans,octa-cis-undecaprenyl phosphate = di-trans,octa-cis-undecaprenyl diphospho-N-acetyl-alpha-D-muramoyl-L-alanyl-D-glutamyl-meso-2,6-diaminopimeloyl-D-alanyl-D-alanine + UMP. It participates in cell wall biogenesis; peptidoglycan biosynthesis. Its function is as follows. Catalyzes the initial step of the lipid cycle reactions in the biosynthesis of the cell wall peptidoglycan: transfers peptidoglycan precursor phospho-MurNAc-pentapeptide from UDP-MurNAc-pentapeptide onto the lipid carrier undecaprenyl phosphate, yielding undecaprenyl-pyrophosphoryl-MurNAc-pentapeptide, known as lipid I. The polypeptide is Phospho-N-acetylmuramoyl-pentapeptide-transferase (Bacillus cytotoxicus (strain DSM 22905 / CIP 110041 / 391-98 / NVH 391-98)).